We begin with the raw amino-acid sequence, 55 residues long: Photosystem II reaction center X protein (55 aa).

A helical membrane pass occupies residues 24–44 (IGSFLAAAALIVVPAASFLLW).

This sequence belongs to the PsbX family. Type 2 subfamily. As to quaternary structure, PSII consists of a core antenna complex that captures photons, and an electron transfer chain that converts photonic excitation into a charge separation. PSII forms dimeric complexes.

The protein resides in the cellular thylakoid membrane. Functionally, involved in the binding and/or turnover of quinones at the Q(B) site of Photosystem II. This Prochlorococcus marinus (strain SARG / CCMP1375 / SS120) protein is Photosystem II reaction center X protein.